We begin with the raw amino-acid sequence, 71 residues long: Small ribosomal subunit protein eS17 (71 aa).

The protein belongs to the eukaryotic ribosomal protein eS17 family.

In Pyrobaculum aerophilum (strain ATCC 51768 / DSM 7523 / JCM 9630 / CIP 104966 / NBRC 100827 / IM2), this protein is Small ribosomal subunit protein eS17.